A 337-amino-acid polypeptide reads, in one-letter code: Probable sulfurtransferase (337 aa).

Residue G83 coordinates ATP. Positions 172 and 175 each coordinate [4Fe-4S] cluster. 2 residues coordinate ATP: K179 and G206. C284 contributes to the [4Fe-4S] cluster binding site.

The protein belongs to the TtcA family. [4Fe-4S] cluster is required as a cofactor. It depends on Mg(2+) as a cofactor.

The chain is Probable sulfurtransferase from Methanocaldococcus jannaschii (strain ATCC 43067 / DSM 2661 / JAL-1 / JCM 10045 / NBRC 100440) (Methanococcus jannaschii).